A 437-amino-acid chain; its full sequence is Purple acid phosphatase 21 (437 aa).

Residues 1 to 25 (MKKMKIFGFLISFSLFFLSPFVCQA) form the signal peptide. An N-linked (GlcNAc...) asparagine glycan is attached at asparagine 30. The Fe cation site is built by aspartate 152, aspartate 179, and tyrosine 182. Aspartate 179 lines the Zn(2+) pocket. Residues asparagine 212 and histidine 296 each coordinate Zn(2+). Asparagine 212 serves as a coordination point for substrate. Histidine 306 (proton donor) is an active-site residue. Histidine 333 is a binding site for Zn(2+). 333–335 (HVH) provides a ligand contact to substrate. Residue histidine 335 coordinates Fe cation.

It belongs to the metallophosphoesterase superfamily. Purple acid phosphatase family. As to quaternary structure, homodimer. Fe cation serves as cofactor. Requires Zn(2+) as cofactor. Expressed flowers and siliques.

The protein resides in the secreted. It catalyses the reaction a phosphate monoester + H2O = an alcohol + phosphate. The polypeptide is Purple acid phosphatase 21 (PAP21) (Arabidopsis thaliana (Mouse-ear cress)).